We begin with the raw amino-acid sequence, 450 residues long: Na(+)/H(+) antiporter NhaA (450 aa).

The next 11 membrane-spanning stretches (helical) occupy residues Phe24 to Val44, Leu75 to Ile95, Ala111 to Leu131, Gly140 to Gly160, Val169 to Phe189, Phe196 to Gly216, Leu224 to Ala244, Trp318 to Ala338, Ile352 to Val372, Gly390 to Phe410, and Ser422 to Leu442.

It belongs to the NhaA Na(+)/H(+) (TC 2.A.33) antiporter family.

Its subcellular location is the cell inner membrane. The catalysed reaction is Na(+)(in) + 2 H(+)(out) = Na(+)(out) + 2 H(+)(in). Functionally, na(+)/H(+) antiporter that extrudes sodium in exchange for external protons. The protein is Na(+)/H(+) antiporter NhaA of Oleidesulfovibrio alaskensis (strain ATCC BAA-1058 / DSM 17464 / G20) (Desulfovibrio alaskensis).